Here is a 67-residue protein sequence, read N- to C-terminus: Conotoxin ArMLKM-01 (67 aa).

Residues 1-24 (MLKMEVVLFTFLVLFPLSTLQLET) form the signal peptide. Positions 25–51 (DQPVERYVENKQDLNPDESRNFMLPIV) are excised as a propeptide. Cystine bridges form between Cys54–Cys65, Cys55–Cys63, and Cys58–Cys66.

The protein belongs to the conotoxin M superfamily. In terms of tissue distribution, expressed by the venom duct.

The protein resides in the secreted. This chain is Conotoxin ArMLKM-01, found in Conus arenatus (Sand-dusted cone).